The sequence spans 330 residues: DNA-directed RNA polymerase subunit alpha (330 aa).

Residues 1–236 (MQGSVTEFLK…EQLDAFVDLR (236 aa)) are alpha N-terminal domain (alpha-NTD). The alpha C-terminal domain (alpha-CTD) stretch occupies residues 250-330 (FDPILLRPVD…NWPPASIAED (81 aa)).

Belongs to the RNA polymerase alpha chain family. In terms of assembly, homodimer. The RNAP catalytic core consists of 2 alpha, 1 beta, 1 beta' and 1 omega subunit. When a sigma factor is associated with the core the holoenzyme is formed, which can initiate transcription.

It carries out the reaction RNA(n) + a ribonucleoside 5'-triphosphate = RNA(n+1) + diphosphate. In terms of biological role, DNA-dependent RNA polymerase catalyzes the transcription of DNA into RNA using the four ribonucleoside triphosphates as substrates. The protein is DNA-directed RNA polymerase subunit alpha of Vibrio atlanticus (strain LGP32) (Vibrio splendidus (strain Mel32)).